The chain runs to 70 residues: Protein SlyX homolog (70 aa).

It belongs to the SlyX family.

In Shewanella putrefaciens (strain CN-32 / ATCC BAA-453), this protein is Protein SlyX homolog.